A 291-amino-acid chain; its full sequence is Aliphatic sulfonates import ATP-binding protein SsuB 2 (291 aa).

Residues 26–247 (LRVRGIAKRY…APGLPALASI (222 aa)) form the ABC transporter domain. 58 to 65 (GRSGCGKS) is an ATP binding site. Positions 264-291 (PAAPKAQTRHGPPRGATAQDTSPLQRIL) are disordered. The segment covering 281–291 (AQDTSPLQRIL) has biased composition (polar residues).

It belongs to the ABC transporter superfamily. Aliphatic sulfonates importer (TC 3.A.1.17.2) family. In terms of assembly, the complex is composed of two ATP-binding proteins (SsuB), two transmembrane proteins (SsuC) and a solute-binding protein (SsuA).

The protein localises to the cell inner membrane. It carries out the reaction ATP + H2O + aliphatic sulfonate-[sulfonate-binding protein]Side 1 = ADP + phosphate + aliphatic sulfonateSide 2 + [sulfonate-binding protein]Side 1.. In terms of biological role, part of the ABC transporter complex SsuABC involved in aliphatic sulfonates import. Responsible for energy coupling to the transport system. This is Aliphatic sulfonates import ATP-binding protein SsuB 2 from Xanthomonas axonopodis pv. citri (strain 306).